The chain runs to 252 residues: Triosephosphate isomerase (252 aa).

Asparagine 10–lysine 12 provides a ligand contact to substrate. The active-site Electrophile is histidine 96. The Proton acceptor role is filled by glutamate 168. Substrate-binding positions include glycine 174, serine 214, and glycine 235 to glycine 236.

This sequence belongs to the triosephosphate isomerase family. In terms of assembly, homodimer.

The protein resides in the cytoplasm. It catalyses the reaction D-glyceraldehyde 3-phosphate = dihydroxyacetone phosphate. The protein operates within carbohydrate biosynthesis; gluconeogenesis. It functions in the pathway carbohydrate degradation; glycolysis; D-glyceraldehyde 3-phosphate from glycerone phosphate: step 1/1. Functionally, seems to be capable of enhancing bacteriocin synthesis. Involved in the gluconeogenesis. Catalyzes stereospecifically the conversion of dihydroxyacetone phosphate (DHAP) to D-glyceraldehyde-3-phosphate (G3P). In Lactobacillus delbrueckii subsp. lactis, this protein is Triosephosphate isomerase.